A 380-amino-acid chain; its full sequence is 3-isopropylmalate dehydrogenase (380 aa).

79–90 contributes to the NAD(+) binding site; sequence GPEWAGVHPTPE. Substrate is bound by residues Arg-97, Arg-107, Arg-136, and Asp-229. Positions 229, 254, and 258 each coordinate Mg(2+). Position 294-306 (294-306) interacts with NAD(+); that stretch reads GSAPDISGKGLAN.

It belongs to the isocitrate and isopropylmalate dehydrogenases family. Homodimer. Requires Mg(2+) as cofactor. The cofactor is Mn(2+).

The protein resides in the cytoplasm. It catalyses the reaction (2R,3S)-3-isopropylmalate + NAD(+) = 4-methyl-2-oxopentanoate + CO2 + NADH. It participates in amino-acid biosynthesis; L-leucine biosynthesis; L-leucine from 3-methyl-2-oxobutanoate: step 3/4. In terms of biological role, catalyzes the oxidation of 3-carboxy-2-hydroxy-4-methylpentanoate (3-isopropylmalate) to 3-carboxy-4-methyl-2-oxopentanoate. The product decarboxylates to 4-methyl-2 oxopentanoate. The chain is 3-isopropylmalate dehydrogenase (LEU2) from Hapsidospora chrysogena (Acremonium chrysogenum).